Consider the following 770-residue polypeptide: MAYGWWRRRRRRWRRWRRRPWRRRWRTRRRRPARRRGRRRNVRRRRRGGRWRRRYRRWKRKGRRRKKAKIIIRQWQPNYRRRCNIVGYIPVLICGENTVSRNYATHSDDTNYPGPFGGGMTTDKFTLRILYDEYKRFMNYWTASNEDLDLCRYLGVNLYFFRHPDVDFIIKINTMPPFLDTELTAPSIHPGMLALDKRARWIPSLKSRPGKKHYIKIRVEAPKMFTDKWYPQTDLCDMVLLTVYATTADMQYPFGSPLTDSVVVNFQVLQSMYDQNISILPTEKSKRTQLHDNITRYTPFYNTTQTIAQLKPFVDAGNVTPVSPTTTWGSYINTTKFTTTATTTYTYPGTTTTTVTMLTCNDSWYRGTVYNNQISQLPKKAAEFYSKATKTLLGDTFTTEDYTLEYHGGLYSSIWLSAGRSYFETPGVYTDIKYNPFTDRGEGNMLWIDWLSKKNMNYDKVQSKCLISDLPLWAAAYGYVEFCAKSTGDQNIHMNAKLLIRSPFTDPQLLVHTDPTKGFVPYSLNFGNGKMPGGSSNVPIRMRAKWYPTLFHQQEVLEALAQSGPFAYHSDIKKVSLGMKYRFKWIWGGNPVRQQVVRNPCKETHSSGNRVPRSLQIVDPKYNSPELTFHTWDFRRGLFGPKAIQRMQQQPTTTDIFSAGRKRPRRDTEVYHSSQEGEQKESLLFLPVKLLRRVPPWEDSQQEESGSQSSEEETQTVSQQLKQQLQQQRILGVKLRLLFNQVQKIQQNQDINPTLLPRGGDLASLFQIAP.

The segment covering 647 to 656 (MQQQPTTTDI) has biased composition (polar residues). Disordered stretches follow at residues 647 to 678 (MQQQ…QEGE) and 697 to 717 (WEDS…TQTV). Residues 666–678 (RDTEVYHSSQEGE) show a composition bias toward basic and acidic residues. Positions 703–717 (EESGSQSSEEETQTV) are enriched in low complexity.

It belongs to the anelloviridae capsid protein family.

The protein localises to the virion. In terms of biological role, self assemble to form an icosahedral capsid. This chain is Capsid protein, found in Torque teno virus (isolate Human/Japan/TRM1/1999) (TTV).